The primary structure comprises 374 residues: Cobalt-precorrin-5B C(1)-methyltransferase (374 aa).

This sequence belongs to the CbiD family.

It carries out the reaction Co-precorrin-5B + S-adenosyl-L-methionine = Co-precorrin-6A + S-adenosyl-L-homocysteine. The protein operates within cofactor biosynthesis; adenosylcobalamin biosynthesis; cob(II)yrinate a,c-diamide from sirohydrochlorin (anaerobic route): step 6/10. In terms of biological role, catalyzes the methylation of C-1 in cobalt-precorrin-5B to form cobalt-precorrin-6A. This is Cobalt-precorrin-5B C(1)-methyltransferase from Synechococcus elongatus (strain ATCC 33912 / PCC 7942 / FACHB-805) (Anacystis nidulans R2).